The following is a 541-amino-acid chain: Amino-acid permease 2 (541 aa).

Residues 1–22 (MSFSPPNKSADATIQITEMTRQ) are compositionally biased toward polar residues. A disordered region spans residues 1 to 43 (MSFSPPNKSADATIQITEMTRQGTPSSGEAAASTPSTSSTESG). Positions 23–41 (GTPSSGEAAASTPSTSSTE) are enriched in low complexity. The next 12 membrane-spanning stretches (helical) occupy residues 66–86 (FSFA…WIYG), 90–110 (GGAA…WALA), 139–159 (VPFL…AGGA), 188–208 (VVGV…LPTA), 214–234 (TSGY…TLLV), 255–275 (GWSP…WIMT), 301–321 (ATTF…VCMG), 347–367 (PAIF…IPGI), 399–419 (PLIA…LGLA), 424–444 (IGAV…IPII), 464–484 (VWVN…FFFP), and 496–516 (YAIV…YTHG).

This sequence belongs to the amino acid-polyamine-organocation (APC) superfamily.

It is found in the membrane. The protein is Amino-acid permease 2 (aap-2) of Neurospora crassa (strain ATCC 24698 / 74-OR23-1A / CBS 708.71 / DSM 1257 / FGSC 987).